A 380-amino-acid chain; its full sequence is MANIRKTHPLLKIINGAVIDLPTPSNISAWWNFGSLLGLCLITQTLTGLFLAMHYTADITLAFSSVAHICRDVNYGWLLRNIHANGASFFFICIYLHIARGLYYGSYLYKETWNIGVLLLLLVMMTAFVGYVLPWGQMSFWGATVITNLLSAFPYIGDTLVQWIWGGFSVDNATLTRFFTFHFLLPFIIMGTTMLHLLFLHETGSNNPTGLDSDADKVTFHPYFSYKDLLGFTILLATLSALALLNPNLLGDPENFTPANPLVTPPHIKPEWYFLFAYAILRSIPNKLGGVLALLFSILILVVVPTLHTSKQRSNTFRPSSQTLFWILVANMLVLTWIGGQPVEHPFIIIGQVASVLYFMLFLFFIPLSGWLENKILDWA.

Helical transmembrane passes span 33-53, 77-98, 113-133, and 178-198; these read FGSLLGLCLITQTLTGLFLAM, WLLRNIHANGASFFFICIYLHI, WNIGVLLLLLVMMTAFVGYVL, and FFTFHFLLPFIIMGTTMLHLL. Residues His83 and His97 each contribute to the heme b site. Residues His182 and His196 each contribute to the heme b site. A ubiquinone is bound at residue His201. A run of 4 helical transmembrane segments spans residues 226 to 246, 288 to 308, 320 to 340, and 347 to 367; these read YKDLLGFTILLATLSALALLN, LGGVLALLFSILILVVVPTLH, SSQTLFWILVANMLVLTWIGG, and FIIIGQVASVLYFMLFLFFIP.

The protein belongs to the cytochrome b family. The cytochrome bc1 complex contains 3 respiratory subunits (MT-CYB, CYC1 and UQCRFS1), 2 core proteins (UQCRC1 and UQCRC2) and probably 6 low-molecular weight proteins. It depends on heme b as a cofactor.

It is found in the mitochondrion inner membrane. In terms of biological role, component of the ubiquinol-cytochrome c reductase complex (complex III or cytochrome b-c1 complex) that is part of the mitochondrial respiratory chain. The b-c1 complex mediates electron transfer from ubiquinol to cytochrome c. Contributes to the generation of a proton gradient across the mitochondrial membrane that is then used for ATP synthesis. In Lepisosteus oculatus (Spotted gar), this protein is Cytochrome b (mt-cyb).